Here is a 77-residue protein sequence, read N- to C-terminus: Large ribosomal subunit protein eL20 (77 aa).

The protein belongs to the eukaryotic ribosomal protein eL20 family. As to quaternary structure, part of the 50S ribosomal subunit. Binds 23S rRNA.

The protein is Large ribosomal subunit protein eL20 of Pyrococcus furiosus (strain ATCC 43587 / DSM 3638 / JCM 8422 / Vc1).